A 192-amino-acid chain; its full sequence is Adenylate kinase (192 aa).

10–15 (GAGKGT) provides a ligand contact to ATP. An NMP region spans residues 30 to 59 (STGDMLRTAVAQATEVGKRAKAVMDAGQLV). AMP is bound by residues threonine 31, arginine 36, 57 to 59 (QLV), 85 to 88 (GYPR), and glutamine 92. An LID region spans residues 126–142 (NRVTETVAAGGTVRSDD). Arginine 127 is a binding site for ATP. Residues arginine 139 and arginine 150 each contribute to the AMP site. Alanine 178 contacts ATP.

It belongs to the adenylate kinase family. Monomer.

The protein localises to the cytoplasm. It carries out the reaction AMP + ATP = 2 ADP. The protein operates within purine metabolism; AMP biosynthesis via salvage pathway; AMP from ADP: step 1/1. Functionally, catalyzes the reversible transfer of the terminal phosphate group between ATP and AMP. Plays an important role in cellular energy homeostasis and in adenine nucleotide metabolism. The protein is Adenylate kinase of Rhizobium meliloti (strain 1021) (Ensifer meliloti).